Reading from the N-terminus, the 160-residue chain is Cytochrome c-type biogenesis protein CcmE (160 aa).

The Cytoplasmic portion of the chain corresponds to 1-7; it reads MTRKQRR. The helical; Signal-anchor for type II membrane protein transmembrane segment at 8-28 threads the bilayer; the sequence is LFMIFGALGTLGVAVGLILFA. Over 29–160 the chain is Periplasmic; it reads LSDNIVFFYG…TQGAAAPLIR (132 aa). The heme site is built by His-122 and Tyr-126. A disordered region spans residues 140-160; it reads VWQEDGQAKPATQGAAAPLIR.

Belongs to the CcmE/CycJ family.

It is found in the cell inner membrane. Functionally, heme chaperone required for the biogenesis of c-type cytochromes. Transiently binds heme delivered by CcmC and transfers the heme to apo-cytochromes in a process facilitated by CcmF and CcmH. This is Cytochrome c-type biogenesis protein CcmE from Beijerinckia indica subsp. indica (strain ATCC 9039 / DSM 1715 / NCIMB 8712).